The following is a 189-amino-acid chain: Cancer/testis antigen family 45 member A3 (189 aa).

A disordered region spans residues 81–119 (KDRMMQKPGSNAPVGGNVTSSFSGDDLECRETASSPKSQ).

This sequence belongs to the CT45 family. As to expression, testis specific. Expressed in cancer cell lines.

Its subcellular location is the nucleus. The sequence is that of Cancer/testis antigen family 45 member A3 from Homo sapiens (Human).